A 766-amino-acid polypeptide reads, in one-letter code: Pentatricopeptide repeat-containing protein At5g28460 (766 aa).

16 PPR repeats span residues 151–181 (TIVA…LDSN), 184–218 (NSQV…ESVF), 221–257 (NRIT…GVSP), 258–292 (NSVW…KTPL), 293–327 (EAPP…KIRP), 328–358 (DVVT…MRGK), 369–404 (DSIH…RCVP), 405–439 (NAVT…EIKP), 440–474 (NVVT…GVKG), 475–509 (NVVT…GCSP), 510–544 (DAKI…GFSL), 545–579 (DLLA…GKKP), 580–614 (DSIT…GLDP), 615–650 (TVTT…KVNP), 651–685 (NTVI…MVRP), and 686–720 (NVET…SCEP).

It belongs to the PPR family. P subfamily.

This Arabidopsis thaliana (Mouse-ear cress) protein is Pentatricopeptide repeat-containing protein At5g28460.